Here is a 156-residue protein sequence, read N- to C-terminus: ATP synthase subunit b (156 aa).

A helical membrane pass occupies residues 7–29 (LLGQAISFGMFVWFCMKYVWPPI).

It belongs to the ATPase B chain family. In terms of assembly, F-type ATPases have 2 components, F(1) - the catalytic core - and F(0) - the membrane proton channel. F(1) has five subunits: alpha(3), beta(3), gamma(1), delta(1), epsilon(1). F(0) has three main subunits: a(1), b(2) and c(10-14). The alpha and beta chains form an alternating ring which encloses part of the gamma chain. F(1) is attached to F(0) by a central stalk formed by the gamma and epsilon chains, while a peripheral stalk is formed by the delta and b chains.

The protein resides in the cell inner membrane. Its function is as follows. F(1)F(0) ATP synthase produces ATP from ADP in the presence of a proton or sodium gradient. F-type ATPases consist of two structural domains, F(1) containing the extramembraneous catalytic core and F(0) containing the membrane proton channel, linked together by a central stalk and a peripheral stalk. During catalysis, ATP synthesis in the catalytic domain of F(1) is coupled via a rotary mechanism of the central stalk subunits to proton translocation. In terms of biological role, component of the F(0) channel, it forms part of the peripheral stalk, linking F(1) to F(0). In Vibrio cholerae serotype O1 (strain ATCC 39541 / Classical Ogawa 395 / O395), this protein is ATP synthase subunit b.